A 235-amino-acid chain; its full sequence is Large ribosomal subunit protein uL1 (235 aa).

It belongs to the universal ribosomal protein uL1 family. In terms of assembly, part of the 50S ribosomal subunit.

In terms of biological role, binds directly to 23S rRNA. The L1 stalk is quite mobile in the ribosome, and is involved in E site tRNA release. Functionally, protein L1 is also a translational repressor protein, it controls the translation of the L11 operon by binding to its mRNA. The protein is Large ribosomal subunit protein uL1 of Mycobacterium bovis (strain ATCC BAA-935 / AF2122/97).